We begin with the raw amino-acid sequence, 100 residues long: Urease subunit gamma (100 aa).

The protein belongs to the urease gamma subunit family. In terms of assembly, heterotrimer of UreA (gamma), UreB (beta) and UreC (alpha) subunits. Three heterotrimers associate to form the active enzyme.

The protein localises to the cytoplasm. It catalyses the reaction urea + 2 H2O + H(+) = hydrogencarbonate + 2 NH4(+). Its pathway is nitrogen metabolism; urea degradation; CO(2) and NH(3) from urea (urease route): step 1/1. This is Urease subunit gamma from Mycobacterium ulcerans (strain Agy99).